The primary structure comprises 180 residues: Protein YOP1 (180 aa).

Position 2 is an N-acetylserine (Ser-2). Residues 2 to 17 (SEYASSIHSQMKQFDT) form an interaction with YIP1 region. Topologically, residues 2–35 (SEYASSIHSQMKQFDTKYSGNRILQQLENKTNLP) are cytoplasmic. The chain crosses the membrane as a helical span at residues 36-55 (KSYLVAGLGFAYLLLIFINV). Over 56–57 (GG) the chain is Lumenal. Residues 58–78 (VGEILSNFAGFVLPAYLSLVA) form a helical membrane-spanning segment. Residues 79–88 (LKTPTSTDDT) lie on the Cytoplasmic side of the membrane. Residues 89–105 (QLLTYWIVFSFLSVIEF) form a helical membrane-spanning segment. Residues 106–108 (WSK) lie on the Lumenal side of the membrane. Residues 109–127 (AILYLIPFYWFLKTVFLIY) form a helical membrane-spanning segment. Over 128–180 (IALPQTGGARMIYQKIVAPLTDRYILRDVSKTEKDEIRASVNEASKATGASVH) the chain is Cytoplasmic.

The protein belongs to the DP1 family. As to quaternary structure, oligomer. Interacts with YIP1.

Its subcellular location is the endoplasmic reticulum membrane. It is found in the golgi apparatus membrane. In terms of biological role, required to generate and maintain the structure of the tubular endoplasmic reticulum network and the vacuole. Induces high curvature in membranes and causes membrane tubule formation. Involved in membrane/vesicle trafficking. The chain is Protein YOP1 (YOP1) from Saccharomyces cerevisiae (strain ATCC 204508 / S288c) (Baker's yeast).